We begin with the raw amino-acid sequence, 162 residues long: Regulator of ribonuclease activity A (162 aa).

The protein belongs to the RraA family. Homotrimer. Binds to both RNA-binding sites in the C-terminal region of Rne and to RhlB.

It localises to the cytoplasm. In terms of biological role, globally modulates RNA abundance by binding to RNase E (Rne) and regulating its endonucleolytic activity. Can modulate Rne action in a substrate-dependent manner by altering the composition of the degradosome. Modulates RNA-binding and helicase activities of the degradosome. The sequence is that of Regulator of ribonuclease activity A from Haemophilus influenzae (strain ATCC 51907 / DSM 11121 / KW20 / Rd).